We begin with the raw amino-acid sequence, 254 residues long: Keratin-associated protein 24-1 (254 aa).

6 repeat units span residues 193 to 202, 203 to 212, 213 to 222, 223 to 232, 233 to 242, and 243 to 252. The tract at residues 193 to 252 is 6 X 10 AA repeats of Y-[ILR]-[SVPC]-[NRTS]-[SNTG]-X-[QHRP]-[PSY]-[QSL]-[SRK]; that stretch reads YISNSCQPQSYLVRNYHYSSYRPTSCRPLSYLSRSFRSLSYIPSTFPPLRYLCSGSRPLK.

This sequence belongs to the PMG family. As to quaternary structure, interacts with hair keratins. Specific expression in the middle/upper hair cuticle.

Its function is as follows. In the hair cortex, hair keratin intermediate filaments are embedded in an interfilamentous matrix, consisting of hair keratin-associated proteins (KRTAP), which are essential for the formation of a rigid and resistant hair shaft through their extensive disulfide bond cross-linking with abundant cysteine residues of hair keratins. The matrix proteins include the high-sulfur and high-glycine-tyrosine keratins. This Homo sapiens (Human) protein is Keratin-associated protein 24-1 (KRTAP24-1).